Consider the following 420-residue polypeptide: Proteinase-activated receptor 1 (420 aa).

The signal sequence occupies residues methionine 1 to glycine 20. Residues serine 21–lysine 42 constitute a propeptide, removed for receptor activation. Asparagine 38 carries N-linked (GlcNAc...) asparagine glycosylation. The Extracellular portion of the chain corresponds to threonine 43 to threonine 101. Positions glutamate 61–arginine 80 are disordered. An N-linked (GlcNAc...) asparagine glycan is attached at asparagine 86. Residues lysine 102–leucine 127 form a helical membrane-spanning segment. At phenylalanine 128–alanine 136 the chain is on the cytoplasmic side. Residues valine 137–phenylalanine 156 traverse the membrane as a helical segment. At lysine 157–arginine 175 the chain is on the extracellular side. A disulfide bridge connects residues cysteine 174 and cysteine 253. A helical transmembrane segment spans residues isoleucine 176 to valine 197. Topologically, residues aspartate 198–arginine 217 are cytoplasmic. Residues alanine 218 to valine 238 form a helical membrane-spanning segment. Residues threonine 239–isoleucine 267 lie on the Extracellular side of the membrane. A helical membrane pass occupies residues tyrosine 268–isoleucine 287. Residues cysteine 288–alanine 310 lie on the Cytoplasmic side of the membrane. Residues leucine 311–leucine 333 form a helical membrane-spanning segment. The Extracellular segment spans residues threonine 334 to tyrosine 345. A helical membrane pass occupies residues phenylalanine 346 to alanine 369. At serine 370–alanine 420 the chain is on the cytoplasmic side.

It belongs to the G-protein coupled receptor 1 family. In terms of processing, proteolytic cleavage generates a new N-terminus that functions as a tethered ligand.

It localises to the cell membrane. Functionally, high affinity receptor that binds the activated thrombin, leading to calcium release from intracellular stores. The thrombin-activated receptor signaling pathway is mediated through PTX-insensitive G proteins, activation of phospholipase C resulting in the production of 1D-myo-inositol 1,4,5-trisphosphate (InsP3) which binds to InsP3 receptors causing calcium release from the stores. The protein is Proteinase-activated receptor 1 of Xenopus laevis (African clawed frog).